The primary structure comprises 210 residues: N-(5'-phosphoribosyl)anthranilate isomerase (210 aa).

The protein belongs to the TrpF family.

The enzyme catalyses N-(5-phospho-beta-D-ribosyl)anthranilate = 1-(2-carboxyphenylamino)-1-deoxy-D-ribulose 5-phosphate. The protein operates within amino-acid biosynthesis; L-tryptophan biosynthesis; L-tryptophan from chorismate: step 3/5. In Eremothecium gossypii (strain ATCC 10895 / CBS 109.51 / FGSC 9923 / NRRL Y-1056) (Yeast), this protein is N-(5'-phosphoribosyl)anthranilate isomerase (TRP1).